The following is a 309-amino-acid chain: Pantothenate synthetase (309 aa).

Thr-2 carries the post-translational modification N-acetylthreonine. 40–47 provides a ligand contact to ATP; that stretch reads MGALHEGH. His-47 serves as the catalytic Proton donor. Gln-72 is a binding site for (R)-pantoate. A beta-alanine-binding site is contributed by Gln-72. Positions 88, 89, and 92 each coordinate Mg(2+). 158-161 provides a ligand contact to ATP; it reads GEKD. Gln-164 is a binding site for (R)-pantoate. ATP-binding positions include Val-187 and 195–198; that span reads MSSR.

This sequence belongs to the pantothenate synthetase family.

The protein localises to the cytoplasm. It carries out the reaction (R)-pantoate + beta-alanine + ATP = (R)-pantothenate + AMP + diphosphate + H(+). It participates in cofactor biosynthesis; (R)-pantothenate biosynthesis; (R)-pantothenate from (R)-pantoate and beta-alanine: step 1/1. With respect to regulation, pantothenate exhibits uncompetitive inhibition toward both D-pantoate and ATP, and non-competitive inhibition toward beta-alanine. AMPCPP exhibits competitive inhibition toward ATP, uncompetitive inhibition toward beta-alanine, and non-competitive inhibition toward D-pantoate. The enzyme is most active in the presence of magnesium or manganese. Other divalent cations (cobalt, nickel, zinc) are less effective. In terms of biological role, catalyzes the condensation of pantoate with beta-alanine in an ATP-dependent reaction via a pantoyl-adenylate intermediate. This is Pantothenate synthetase (panC) from Mycobacterium tuberculosis (strain ATCC 25618 / H37Rv).